The primary structure comprises 272 residues: HMP-PP phosphatase (272 aa).

The active-site Nucleophile is the D8. Residues D8, D10, and D212 each contribute to the Mg(2+) site.

This sequence belongs to the HAD-like hydrolase superfamily. Cof family. Requires Mg(2+) as cofactor.

It carries out the reaction 4-amino-2-methyl-5-(diphosphooxymethyl)pyrimidine + H2O = 4-amino-2-methyl-5-(phosphooxymethyl)pyrimidine + phosphate + H(+). Its function is as follows. Catalyzes the hydrolysis of 4-amino-2-methyl-5-hydroxymethylpyrimidine pyrophosphate (HMP-PP) to 4-amino-2-methyl-5-hydroxymethylpyrimidine phosphate (HMP-P). The chain is HMP-PP phosphatase from Escherichia fergusonii (strain ATCC 35469 / DSM 13698 / CCUG 18766 / IAM 14443 / JCM 21226 / LMG 7866 / NBRC 102419 / NCTC 12128 / CDC 0568-73).